Reading from the N-terminus, the 360-residue chain is tRNA/tmRNA (uracil-C(5))-methyltransferase (360 aa).

5 residues coordinate S-adenosyl-L-methionine: Gln-185, Tyr-213, Asn-218, Glu-234, and Asp-294. Cys-319 functions as the Nucleophile in the catalytic mechanism. The active-site Proton acceptor is the Glu-353.

The protein belongs to the class I-like SAM-binding methyltransferase superfamily. RNA M5U methyltransferase family. TrmA subfamily.

The enzyme catalyses uridine(54) in tRNA + S-adenosyl-L-methionine = 5-methyluridine(54) in tRNA + S-adenosyl-L-homocysteine + H(+). It catalyses the reaction uridine(341) in tmRNA + S-adenosyl-L-methionine = 5-methyluridine(341) in tmRNA + S-adenosyl-L-homocysteine + H(+). Its function is as follows. Dual-specificity methyltransferase that catalyzes the formation of 5-methyluridine at position 54 (m5U54) in all tRNAs, and that of position 341 (m5U341) in tmRNA (transfer-mRNA). The protein is tRNA/tmRNA (uracil-C(5))-methyltransferase of Nitratiruptor sp. (strain SB155-2).